Consider the following 234-residue polypeptide: Proteasome subunit alpha type-2 (234 aa).

A2 bears the N-acetylalanine mark. The residue at position 6 (Y6) is a Phosphotyrosine. A phosphoserine mark is found at S7, S14, and S16. The residue at position 24 (Y24) is a Phosphotyrosine. Residue K70 is modified to N6-acetyllysine. 2 positions are modified to phosphotyrosine: Y76 and Y121. Position 171 is an N6-acetyllysine (K171).

This sequence belongs to the peptidase T1A family. The 26S proteasome consists of a 20S proteasome core and two 19S regulatory subunits. The 20S proteasome core is a barrel-shaped complex made of 28 subunits that are arranged in four stacked rings. The two outer rings are each formed by seven alpha subunits, and the two inner rings are formed by seven beta subunits. The proteolytic activity is exerted by three beta-subunits PSMB5, PSMB6 and PSMB7. Post-translationally, phosphorylated on tyrosine residues; which may be important for nuclear import. As to expression, detected in liver (at protein level).

The protein resides in the cytoplasm. The protein localises to the nucleus. Component of the 20S core proteasome complex involved in the proteolytic degradation of most intracellular proteins. This complex plays numerous essential roles within the cell by associating with different regulatory particles. Associated with two 19S regulatory particles, forms the 26S proteasome and thus participates in the ATP-dependent degradation of ubiquitinated proteins. The 26S proteasome plays a key role in the maintenance of protein homeostasis by removing misfolded or damaged proteins that could impair cellular functions, and by removing proteins whose functions are no longer required. Associated with the PA200 or PA28, the 20S proteasome mediates ubiquitin-independent protein degradation. This type of proteolysis is required in several pathways including spermatogenesis (20S-PA200 complex) or generation of a subset of MHC class I-presented antigenic peptides (20S-PA28 complex). The polypeptide is Proteasome subunit alpha type-2 (Psma2) (Mus musculus (Mouse)).